Here is a 634-residue protein sequence, read N- to C-terminus: MPVASSEYQNEHYASFATTSRLVTCLVSETLVPVFFVPVKSVDRNNQFIGLCLLLRPTTVKQESELPTNITASDILTVVPLRGLPILNNERVALFNGIRCPQIDLVDFLDMLPHIYSVESSGSLKSGDSLKQKTFDTLSAILDGNKTFDLVDGYSAVQLWNHFAQDLEINSKLREQIGQELGSSILFQKYTYDNPKPLPTLNSSTIKWEQSVVEGHATHPMHKARKSFPPMPPLNPGSYDLDHPAVRLVGIPRENAILRGEYEELSAPLVNALMDAGGNHKDIRAQYQNYVFIAIHELQLPNIQEKFKDAVIFSKEHQLNVEALASLRSVARPDILPGLSVKLCLGIKISSALRTVTPFTTYFGPGFSFNVVPKLTYDHEVLAIERELGTITYRHEDSDVAKHCSSVIREALEYDPKYQDDLFIPCGALVEKIQRPDTDETLVAHVWNLDTKEKRVEFLDRYVDFALRSFLPPCLINGVAFEAHGQNTLARFDRKTGLLKGFVIRDFGGVKAHNETLKKSAGVELDILPDSCVEAHSLEEVFKLLYHTLFHCQLQRLIRVLDLHYSGEGWEIVRKYLTQYVPKDHVMWPMFMESSKVPGKCLVRMKIDELYRDYIYRPVPNMIKYEPQSVPEAI.

NRPS-independent siderophore synthetase that catalyzes the rhizoferrin biosynthesis from citrate and diaminobutane via an ATP-dependent condensation of citrate with diaminobutane followed by the addition of a second citrate to the monocitryl-diaminobutane intermediate. Can also use as substrates the citrate and diaminobutane homologs oxaloacetic acid, diaminopropane, diaminobutane, diaminopentane, tricarballylic acid, hydroxylamine and ornithine. Forms only a mono-substituted intermediate with oxaloacetic acid and diaminopentane whereas both mono-citryl intermediates and full rhizoferrin derivatives were detected when diaminopropane, and ornithine were used as substrates. Tricarballylic acid only forms a rhizoferrin derivative, but no mono-substituted intermediate. This Rhizopus delemar (strain RA 99-880 / ATCC MYA-4621 / FGSC 9543 / NRRL 43880) (Mucormycosis agent) protein is NRPS-independent siderophore synthetase rfs.